We begin with the raw amino-acid sequence, 1427 residues long: ATP-binding cassette transporter abc1 (1427 aa).

A helical membrane pass occupies residues 26–46 (LLLFYLSLFSLTNLFLIQKLF). N-linked (GlcNAc...) asparagine glycosylation occurs at Asn49. 9 helical membrane-spanning segments follow: residues 63–83 (CLLEYIQIILSIVSAALSFYL), 87–107 (AVWWAIRTITHLEIVGLNILS), 115–135 (LFSWISVANAFGLLLLRLISI), 155–175 (LLLPLAYNITLFLLVIIPLFF), 197–217 (CSIFSLIFTYGWLNGIIWKSW), 262–282 (ILLMVFLSVLVSSTLFVTPLA), 298–318 (GNSPFLWVFVLLIGPYLASVV), 345–367 (VLTSKTLFVAVDGSKINLDYVYN), and 397–417 (MYFLYQLLGWSAYVGLLLAIL). One can recognise an ABC transmembrane type-1 1 domain in the interval 262-549 (ILLMVFLSVL…LASVSRQFIQ (288 aa)). Residue Asn437 is glycosylated (N-linked (GlcNAc...) asparagine). A run of 2 helical transmembrane segments spans residues 489-509 (IIFKSGMKIAPFISMFITFAI) and 513-533 (IMGHQLTPATAFTSISMFGLL). 3 N-linked (GlcNAc...) asparagine glycosylation sites follow: Asn567, Asn581, and Asn601. An ABC transporter 1 domain is found at 579–807 (FENTSLSWSP…PSTFFSSNTK (229 aa)). A helical membrane pass occupies residues 609-629 (FTLVVGSTGSGKSTLAMALLG). ATP is bound at residue 614–621 (GSTGSGKS). Residues Asn658 and Asn703 are each glycosylated (N-linked (GlcNAc...) asparagine). The helical transmembrane segment at 760–780 (IILFTHNVSLCLPIAENVIVL) threads the bilayer. 2 N-linked (GlcNAc...) asparagine glycosylation sites follow: Asn782 and Asn842. Residues 862 to 1142 (ILGSILLVMM…FVRANNEILT (281 aa)) enclose the ABC transmembrane type-1 2 domain. The next 3 membrane-spanning stretches (helical) occupy residues 866 to 886 (ILLVMMSQVSLASIHFWIALW), 896 to 916 (LPSSFSFLWGYAILLFIYFLM), and 973 to 993 (LLWASLEGMLLCVMAILITML). The N-linked (GlcNAc...) asparagine glycan is linked to Asn994. Helical transmembrane passes span 995–1015 (VTLVMPIFMVPAAFVSLLVYL), 1086–1106 (LAIRTDGISGLVGFSTGLIAL), and 1114–1134 (GLVGFSLNSAIGFNISVLVFV). Residues Asn1161 and Asn1184 are each glycosylated (N-linked (GlcNAc...) asparagine). The 243-residue stretch at 1180-1422 (VSIKNLTVSY…RRAFWKMCKE (243 aa)) folds into the ABC transporter 2 domain. 1214–1221 (GRTGSGKS) is an ATP binding site. Residues 1223–1243 (MGLTLLRFTMIMSGAVEVDGI) traverse the membrane as a helical segment. An N-linked (GlcNAc...) asparagine glycan is attached at Asn1324.

It belongs to the ABC transporter superfamily. ABCC family. Conjugate transporter (TC 3.A.1.208) subfamily.

Its subcellular location is the membrane. The polypeptide is ATP-binding cassette transporter abc1 (abc1) (Schizosaccharomyces pombe (strain 972 / ATCC 24843) (Fission yeast)).